Reading from the N-terminus, the 114-residue chain is Cytochrome c oxidase subunit 7A2-like, mitochondrial (114 aa).

Residues M1–A55 constitute a mitochondrion transit peptide. At K69 the chain carries N6-acetyllysine. A helical membrane pass occupies residues P82–M107.

The protein belongs to the cytochrome c oxidase VIIa family. As to quaternary structure, interacts with the mitochondrial respiratory complexes III (CIII) and IV (CIV), promoting their association.

It is found in the mitochondrion inner membrane. Functionally, assembly factor that mediates the formation of some mitochondrial respiratory supercomplexes (respirasomes), thereby promoting oxidative phosphorylation and energy metabolism. Acts as a molecular adapter that associates with both mitochondrial respiratory complexes III (CIII) and IV (CIV), promoting their association. Mediates the formation of various mitochondrial respiratory supercomplexes, such as MCIII(2)IV(2), composed of two CIII and two CIV, and the CS-respirasome (MCI(1)III(2)IV(2)), composed of one CI, two CIII and two CIV. Not involved in the formation of the canonical respirasome (MCI(1)III(2)IV(1)), composed of one CI, two CIII and one CIV. The formation of different respirasomes is important for cell adaptation to oxygen conditions and prevent metabolic exhaustion: supercomplexes mediated by COX7A2L/SCAF1 are required to maintain oxidative phosphorylation upon low oxygen conditions and promote metabolic rewiring toward glycolysis. This is Cytochrome c oxidase subunit 7A2-like, mitochondrial from Bos taurus (Bovine).